Reading from the N-terminus, the 88-residue chain is DNA-directed RNA polymerase subunit omega (88 aa).

Belongs to the RNA polymerase subunit omega family. The RNAP catalytic core consists of 2 alpha, 1 beta, 1 beta' and 1 omega subunit. When a sigma factor is associated with the core the holoenzyme is formed, which can initiate transcription.

The catalysed reaction is RNA(n) + a ribonucleoside 5'-triphosphate = RNA(n+1) + diphosphate. Promotes RNA polymerase assembly. Latches the N- and C-terminal regions of the beta' subunit thereby facilitating its interaction with the beta and alpha subunits. This is DNA-directed RNA polymerase subunit omega from Anaeromyxobacter sp. (strain Fw109-5).